Here is a 436-residue protein sequence, read N- to C-terminus: 3-ketoacyl-CoA thiolase (436 aa).

The active-site Acyl-thioester intermediate is the C99. Active-site proton acceptor residues include H392 and C422.

The protein belongs to the thiolase-like superfamily. Thiolase family. In terms of assembly, heterotetramer of two alpha chains (FadJ) and two beta chains (FadI).

It is found in the cytoplasm. The catalysed reaction is an acyl-CoA + acetyl-CoA = a 3-oxoacyl-CoA + CoA. The protein operates within lipid metabolism; fatty acid beta-oxidation. Functionally, catalyzes the final step of fatty acid oxidation in which acetyl-CoA is released and the CoA ester of a fatty acid two carbons shorter is formed. This chain is 3-ketoacyl-CoA thiolase, found in Escherichia coli O1:K1 / APEC.